A 716-amino-acid polypeptide reads, in one-letter code: Fatty acid oxidation complex subunit alpha (716 aa).

Residues 1–189 (MIYQSPTIQV…KVGAVDAVVA (189 aa)) are enoyl-CoA hydratase/isomerase. Asp-296 serves as a coordination point for substrate. Positions 311–716 (KEVKNAAVLG…ATNNGSYYQA (406 aa)) are 3-hydroxyacyl-CoA dehydrogenase. Residues Met-324, Asp-343, 400–402 (VVE), Lys-407, and Ser-429 contribute to the NAD(+) site. The active-site For 3-hydroxyacyl-CoA dehydrogenase activity is His-450. Asn-453 contacts NAD(+). Asn-500 and Tyr-660 together coordinate substrate.

In the N-terminal section; belongs to the enoyl-CoA hydratase/isomerase family. This sequence in the C-terminal section; belongs to the 3-hydroxyacyl-CoA dehydrogenase family. Heterotetramer of two alpha chains (FadB) and two beta chains (FadA).

The catalysed reaction is a (3S)-3-hydroxyacyl-CoA + NAD(+) = a 3-oxoacyl-CoA + NADH + H(+). The enzyme catalyses a (3S)-3-hydroxyacyl-CoA = a (2E)-enoyl-CoA + H2O. It carries out the reaction a 4-saturated-(3S)-3-hydroxyacyl-CoA = a (3E)-enoyl-CoA + H2O. It catalyses the reaction (3S)-3-hydroxybutanoyl-CoA = (3R)-3-hydroxybutanoyl-CoA. The catalysed reaction is a (3Z)-enoyl-CoA = a 4-saturated (2E)-enoyl-CoA. The enzyme catalyses a (3E)-enoyl-CoA = a 4-saturated (2E)-enoyl-CoA. It functions in the pathway lipid metabolism; fatty acid beta-oxidation. Functionally, involved in the aerobic and anaerobic degradation of long-chain fatty acids via beta-oxidation cycle. Catalyzes the formation of 3-oxoacyl-CoA from enoyl-CoA via L-3-hydroxyacyl-CoA. It can also use D-3-hydroxyacyl-CoA and cis-3-enoyl-CoA as substrate. This chain is Fatty acid oxidation complex subunit alpha, found in Shewanella putrefaciens (strain CN-32 / ATCC BAA-453).